Reading from the N-terminus, the 104-residue chain is Nucleoid-associated protein jk2011 (104 aa).

It belongs to the YbaB/EbfC family. Homodimer.

The protein resides in the cytoplasm. It is found in the nucleoid. Binds to DNA and alters its conformation. May be involved in regulation of gene expression, nucleoid organization and DNA protection. The polypeptide is Nucleoid-associated protein jk2011 (Corynebacterium jeikeium (strain K411)).